We begin with the raw amino-acid sequence, 291 residues long: Popeye domain-containing protein 3 (291 aa).

An N-linked (GlcNAc...) asparagine glycan is attached at Asn4. The next 3 membrane-spanning stretches (helical) occupy residues 27-44, 48-70, and 77-99; these read GAIY…FMGG, FGLL…WAWV, and IFSW…AYQV.

Belongs to the popeye family. As to expression, expressed in cardiac and skeletal muscle.

It is found in the membrane. Functionally, may play a role in the maintenance of heart function mediated, at least in part, through cAMP-binding. May play a role in the regulation of KCNK2-mediated current amplitude. The sequence is that of Popeye domain-containing protein 3 (Popdc3) from Mus musculus (Mouse).